We begin with the raw amino-acid sequence, 457 residues long: Probable mitochondrial-processing peptidase subunit beta (457 aa).

H66 serves as a coordination point for Zn(2+). E69 functions as the Proton acceptor in the catalytic mechanism. Positions 70 and 146 each coordinate Zn(2+).

The protein belongs to the peptidase M16 family. As to quaternary structure, heterodimer of mas2 (alpha) and qcr1 (beta) subunits, forming the mitochondrial processing protease (MPP) in which mas2 is involved in substrate recognition and binding and qcr1 is the catalytic subunit. The cofactor is Zn(2+).

It is found in the mitochondrion matrix. The catalysed reaction is Release of N-terminal transit peptides from precursor proteins imported into the mitochondrion, typically with Arg in position P2.. Its activity is regulated as follows. Binding to mas2 is required for catalytic activity. In terms of biological role, catalytic subunit of the essential mitochondrial processing protease (MPP), which cleaves the mitochondrial sequence off newly imported precursors proteins. Preferentially, cleaves after an arginine at position P2. The sequence is that of Probable mitochondrial-processing peptidase subunit beta (qcr1) from Schizosaccharomyces pombe (strain 972 / ATCC 24843) (Fission yeast).